The sequence spans 1059 residues: Isoleucine--tRNA ligase (1059 aa).

Residues 47-57 (PYTSGQMHLGT) carry the 'HIGH' region motif. The short motif at 606–610 (KMSKS) is the 'KMSKS' region element. An ATP-binding site is contributed by Lys609.

The protein belongs to the class-I aminoacyl-tRNA synthetase family. IleS type 2 subfamily. Monomer. Zn(2+) is required as a cofactor.

It localises to the cytoplasm. The catalysed reaction is tRNA(Ile) + L-isoleucine + ATP = L-isoleucyl-tRNA(Ile) + AMP + diphosphate. Its function is as follows. Catalyzes the attachment of isoleucine to tRNA(Ile). As IleRS can inadvertently accommodate and process structurally similar amino acids such as valine, to avoid such errors it has two additional distinct tRNA(Ile)-dependent editing activities. One activity is designated as 'pretransfer' editing and involves the hydrolysis of activated Val-AMP. The other activity is designated 'posttransfer' editing and involves deacylation of mischarged Val-tRNA(Ile). The chain is Isoleucine--tRNA ligase from Haloquadratum walsbyi (strain DSM 16790 / HBSQ001).